Reading from the N-terminus, the 248-residue chain is Ubiquinone biosynthesis O-methyltransferase (248 aa).

4 residues coordinate S-adenosyl-L-methionine: Arg-41, Gly-72, Asp-93, and Met-136.

Belongs to the methyltransferase superfamily. UbiG/COQ3 family.

It carries out the reaction a 3-demethylubiquinol + S-adenosyl-L-methionine = a ubiquinol + S-adenosyl-L-homocysteine + H(+). The enzyme catalyses a 3-(all-trans-polyprenyl)benzene-1,2-diol + S-adenosyl-L-methionine = a 2-methoxy-6-(all-trans-polyprenyl)phenol + S-adenosyl-L-homocysteine + H(+). The protein operates within cofactor biosynthesis; ubiquinone biosynthesis. O-methyltransferase that catalyzes the 2 O-methylation steps in the ubiquinone biosynthetic pathway. This Rhizobium etli (strain ATCC 51251 / DSM 11541 / JCM 21823 / NBRC 15573 / CFN 42) protein is Ubiquinone biosynthesis O-methyltransferase.